Consider the following 60-residue polypeptide: Defensin MGD-1 (60 aa).

Intrachain disulfides connect C4/C25, C10/C33, C14/C35, and C21/C38. W28 bears the 3-hydroxytryptophan mark. Position 38 is a cysteine amide (C38). Positions 39-60 are excised as a propeptide; the sequence is GGRREDVEDIFDIFDNEAADRF.

Belongs to the invertebrate defensin family. Type 2 subfamily. The hydroxylation of the Trp-28 is not important for the antibacterial activity. Abundantly expressed in hemocytes.

It localises to the secreted. Its function is as follows. Active against both Gram-positive and Gram-negative bacteria but is not cytotoxic towards human erythrocytes or protozoa. The protein is Defensin MGD-1 (FH3) of Mytilus galloprovincialis (Mediterranean mussel).